A 236-amino-acid chain; its full sequence is ATP synthase subunit a (236 aa).

5 helical membrane passes run 18–38 (STVMMLLVAAIIVFLIAFIST), 79–99 (GITLIMFIAVSNLLGLPFSIV), 112–132 (DPTVTMTLATMILVLSHFYGV), 174–194 (IYAGEILLGLLAGLASSGAVG), and 205–227 (WQGFSIFIGFIQAFIFTMLTMVY).

Belongs to the ATPase A chain family. F-type ATPases have 2 components, CF(1) - the catalytic core - and CF(0) - the membrane proton channel. CF(1) has five subunits: alpha(3), beta(3), gamma(1), delta(1), epsilon(1). CF(0) has three main subunits: a(1), b(2) and c(9-12). The alpha and beta chains form an alternating ring which encloses part of the gamma chain. CF(1) is attached to CF(0) by a central stalk formed by the gamma and epsilon chains, while a peripheral stalk is formed by the delta and b chains.

It localises to the cell membrane. Key component of the proton channel; it plays a direct role in the translocation of protons across the membrane. This chain is ATP synthase subunit a, found in Lysinibacillus sphaericus (strain C3-41).